The following is a 142-amino-acid chain: Putative pre-16S rRNA nuclease (142 aa).

It belongs to the YqgF nuclease family.

It localises to the cytoplasm. Its function is as follows. Could be a nuclease involved in processing of the 5'-end of pre-16S rRNA. The protein is Putative pre-16S rRNA nuclease of Lawsonia intracellularis (strain PHE/MN1-00).